A 404-amino-acid chain; its full sequence is Major outer membrane porin (404 aa).

Positions 1 to 22 are cleaved as a signal peptide; the sequence is MKKLLKSVLAFAVLGSASSLHA. A disordered region spans residues 85–110; it reads GPVPTTTDTDAAADITTSTPRENPAY. Low complexity predominate over residues 89-103; it reads TTTDTDAAADITTST.

It belongs to the chlamydial porin (CP) (TC 1.B.2) family. As to quaternary structure, part of a disulfide cross-linked outer membrane complex (COMC) composed of the major outer membrane porin (MOMP), the small cysteine-rich protein (OmcA) and the large cysteine-rich periplasmic protein (OmcB).

The protein resides in the cell outer membrane. In terms of biological role, in elementary bodies (EBs, the infectious stage, which is able to survive outside the host cell) provides the structural integrity of the outer envelope through disulfide cross-links with the small cysteine-rich protein and the large cysteine-rich periplasmic protein. It has been described in publications as the Sarkosyl-insoluble COMC (Chlamydia outer membrane complex), and serves as the functional equivalent of peptidoglycan. Functionally, permits diffusion of specific solutes through the outer membrane. The polypeptide is Major outer membrane porin (ompA) (Chlamydia muridarum).